Consider the following 103-residue polypeptide: Histone H4 (103 aa).

Lys6 is modified (N6-acetyl-N6-methyllysine; alternate). 3 positions are modified to N6-methyllysine; alternate: Lys6, Lys9, and Lys13. Lys13 is subject to N6-acetyl-N6-methyllysine; alternate. A DNA-binding region spans residues 17–21 (KRHRK). N6-glutaryllysine is present on Lys92.

This sequence belongs to the histone H4 family. As to quaternary structure, the nucleosome is a histone octamer containing two molecules each of H2A, H2B, H3 and H4 assembled in one H3-H4 heterotetramer and two H2A-H2B heterodimers. The octamer wraps approximately 147 bp of DNA. Glutarylation at Lys-92 (H4K91glu) destabilizes nucleosomes by promoting dissociation of the H2A-H2B dimers from nucleosomes.

The protein resides in the nucleus. Its subcellular location is the chromosome. Core component of nucleosome. Nucleosomes wrap and compact DNA into chromatin, limiting DNA accessibility to the cellular machineries which require DNA as a template. Histones thereby play a central role in transcription regulation, DNA repair, DNA replication and chromosomal stability. DNA accessibility is regulated via a complex set of post-translational modifications of histones, also called histone code, and nucleosome remodeling. The chain is Histone H4 (H4.1) from Mortierella alpina (Oleaginous fungus).